The chain runs to 295 residues: Succinate dehydrogenase [ubiquinone] iron-sulfur subunit, mitochondrial (295 aa).

The 2Fe-2S ferredoxin-type domain occupies Glu-67–Met-144. Positions 106, 111, 114, and 126 each coordinate [2Fe-2S] cluster. The region spanning Glu-185–Tyr-215 is the 4Fe-4S ferredoxin-type domain. Residues Cys-195, Cys-198, and Cys-201 each contribute to the [4Fe-4S] cluster site. Position 205 (Cys-205) interacts with [3Fe-4S] cluster. A ubiquinone is bound at residue Trp-210. Cys-252 and Cys-258 together coordinate [3Fe-4S] cluster. Cys-262 serves as a coordination point for [4Fe-4S] cluster.

It belongs to the succinate dehydrogenase/fumarate reductase iron-sulfur protein family. Component of complex II composed of four subunits: a flavoprotein (FP), an iron-sulfur protein (IP), and a cytochrome b composed of a large and a small subunit. [2Fe-2S] cluster is required as a cofactor. The cofactor is [3Fe-4S] cluster. It depends on [4Fe-4S] cluster as a cofactor.

It localises to the mitochondrion inner membrane. The catalysed reaction is a quinone + succinate = fumarate + a quinol. The protein operates within carbohydrate metabolism; tricarboxylic acid cycle; fumarate from succinate (eukaryal route): step 1/1. Functionally, iron-sulfur protein (IP) subunit of succinate dehydrogenase (SDH) that is involved in complex II of the mitochondrial electron transport chain and is responsible for transferring electrons from succinate to ubiquinone (coenzyme Q). This Mycosarcoma maydis (Corn smut fungus) protein is Succinate dehydrogenase [ubiquinone] iron-sulfur subunit, mitochondrial (SDH2).